Here is a 346-residue protein sequence, read N- to C-terminus: Nicotinate-nucleotide--dimethylbenzimidazole phosphoribosyltransferase (346 aa).

Residue E312 is the Proton acceptor of the active site.

Belongs to the CobT family.

It catalyses the reaction 5,6-dimethylbenzimidazole + nicotinate beta-D-ribonucleotide = alpha-ribazole 5'-phosphate + nicotinate + H(+). Its pathway is nucleoside biosynthesis; alpha-ribazole biosynthesis; alpha-ribazole from 5,6-dimethylbenzimidazole: step 1/2. Functionally, catalyzes the synthesis of alpha-ribazole-5'-phosphate from nicotinate mononucleotide (NAMN) and 5,6-dimethylbenzimidazole (DMB). This is Nicotinate-nucleotide--dimethylbenzimidazole phosphoribosyltransferase from Cupriavidus necator (strain ATCC 17699 / DSM 428 / KCTC 22496 / NCIMB 10442 / H16 / Stanier 337) (Ralstonia eutropha).